Reading from the N-terminus, the 551-residue chain is Alkaline/neutral invertase CINV1 (551 aa).

An N-acetylmethionine modification is found at methionine 1. Phosphoserine occurs at positions 11, 14, 44, and 61. The tract at residues 50 to 74 (TGYSRHDGIHDSPRGRSVLDTPLSS) is disordered. Over residues 53–63 (SRHDGIHDSPR) the composition is skewed to basic and acidic residues. Threonine 70 carries the phosphothreonine modification. Phosphoserine is present on serine 547.

The protein belongs to the glycosyl hydrolase 100 family. As to quaternary structure, forms homohexamers. Interacts with PIP5K9. Interaction with PIP5K9 represses CINV1 activity. Interacts with GRF1, GRF2, GRF3, GRF4, GRF5, GRF6, GRF7, GRF8 and GRF10; these interactions are dependent of the phosphorylation at Ser-547. Post-translationally, phosphorylated at Ser-547 by CPK3 and CPK21. As to expression, expressed in radicle, hypocotyls, root tips and vascular cylinder, leaf vasculature, shoot stipules, trichomes, stem, stigma apex and base of siliques.

The protein localises to the cytoplasm. It is found in the cytosol. Its subcellular location is the nucleus. The enzyme catalyses Hydrolysis of terminal non-reducing beta-D-fructofuranoside residues in beta-D-fructofuranosides.. Its function is as follows. Cytosolic invertase that specifically cleaves sucrose into glucose and fructose and is involved in the regulation of multiple tissue development including primary root elongation, root hair growth, leaf and silique development, and floral transition. Is involved in osmotic stress-induced inhibition on lateral root growth by controlling the concentration of hexose in cells. May regulate sugar-mediated root development by controlling sucrose catabolism in root cells. Contributes to carbon partitioning and cellulose biosynthesis in seedlings. This chain is Alkaline/neutral invertase CINV1, found in Arabidopsis thaliana (Mouse-ear cress).